The chain runs to 145 residues: Large ribosomal subunit protein uL11 (145 aa).

It belongs to the universal ribosomal protein uL11 family. Part of the ribosomal stalk of the 50S ribosomal subunit. Interacts with L10 and the large rRNA to form the base of the stalk. L10 forms an elongated spine to which L12 dimers bind in a sequential fashion forming a multimeric L10(L12)X complex. Post-translationally, one or more lysine residues are methylated.

In terms of biological role, forms part of the ribosomal stalk which helps the ribosome interact with GTP-bound translation factors. This is Large ribosomal subunit protein uL11 from Rubrobacter xylanophilus (strain DSM 9941 / JCM 11954 / NBRC 16129 / PRD-1).